The following is a 349-amino-acid chain: 5,10-methylenetetrahydromethanopterin reductase (349 aa).

It belongs to the mer family. Homotetramer composed of two loosely associated dimers.

It localises to the cytoplasm. It carries out the reaction 5-methyl-5,6,7,8-tetrahydromethanopterin + oxidized coenzyme F420-(gamma-L-Glu)(n) + H(+) = 5,10-methylenetetrahydromethanopterin + reduced coenzyme F420-(gamma-L-Glu)(n). It functions in the pathway one-carbon metabolism; methanogenesis from CO(2); methyl-coenzyme M from 5,10-methylene-5,6,7,8-tetrahydromethanopterin: step 1/2. Requires the presence of relatively high concentrations of either sulfate or phosphate for maximal activity. Catalyzes the reversible reduction of methylene-H(4)MPT to methyl-H(4)MPT. This chain is 5,10-methylenetetrahydromethanopterin reductase, found in Methanopyrus kandleri (strain AV19 / DSM 6324 / JCM 9639 / NBRC 100938).